The primary structure comprises 367 residues: MTASQRTLMVMAGGTGGHVFPGLAVAHRMEAAGWRVVWLGNPAGMEATLVPKHGIPMEYVRFGGLRGKGLKTKLTLPFNLLRACGQSLAALRRVRPDVVLGMGGYITFPAGVMTALSGRPLVLHEQNSIAGLTNKVLAKFAKRVLVAFPGALPHAEWTGNPIRAELAGTEAPKARYAARSGPLNVLVVGGSLGAAALNEVVPRALAMLTPGERPRIVHQAGAKHIEALKANYEAAGFAAGEDVRLVPFIDDMAAAYAAADLVICRSGAMTVSEIAAVGVAALFVPFPYAVDDHQTSNAAFLADAGAAVLVQQRDLSAELLADWLRGQSRASLADMAERSRSLAKPEATDEVARVCAKAAGANLETLQ.

Residues 15–17 (TGG), N127, R163, S191, I249, and Q294 contribute to the UDP-N-acetyl-alpha-D-glucosamine site.

This sequence belongs to the glycosyltransferase 28 family. MurG subfamily.

It localises to the cell inner membrane. The catalysed reaction is di-trans,octa-cis-undecaprenyl diphospho-N-acetyl-alpha-D-muramoyl-L-alanyl-D-glutamyl-meso-2,6-diaminopimeloyl-D-alanyl-D-alanine + UDP-N-acetyl-alpha-D-glucosamine = di-trans,octa-cis-undecaprenyl diphospho-[N-acetyl-alpha-D-glucosaminyl-(1-&gt;4)]-N-acetyl-alpha-D-muramoyl-L-alanyl-D-glutamyl-meso-2,6-diaminopimeloyl-D-alanyl-D-alanine + UDP + H(+). Its pathway is cell wall biogenesis; peptidoglycan biosynthesis. Functionally, cell wall formation. Catalyzes the transfer of a GlcNAc subunit on undecaprenyl-pyrophosphoryl-MurNAc-pentapeptide (lipid intermediate I) to form undecaprenyl-pyrophosphoryl-MurNAc-(pentapeptide)GlcNAc (lipid intermediate II). The sequence is that of UDP-N-acetylglucosamine--N-acetylmuramyl-(pentapeptide) pyrophosphoryl-undecaprenol N-acetylglucosamine transferase from Burkholderia lata (strain ATCC 17760 / DSM 23089 / LMG 22485 / NCIMB 9086 / R18194 / 383).